Consider the following 451-residue polypeptide: Phosphoglucosamine mutase (451 aa).

Serine 101 functions as the Phosphoserine intermediate in the catalytic mechanism. Serine 101, aspartate 240, aspartate 242, and aspartate 244 together coordinate Mg(2+). Position 101 is a phosphoserine (serine 101).

This sequence belongs to the phosphohexose mutase family. Mg(2+) serves as cofactor. Post-translationally, activated by phosphorylation.

It carries out the reaction alpha-D-glucosamine 1-phosphate = D-glucosamine 6-phosphate. Its function is as follows. Catalyzes the conversion of glucosamine-6-phosphate to glucosamine-1-phosphate. The protein is Phosphoglucosamine mutase of Streptococcus pyogenes serotype M12 (strain MGAS2096).